Here is a 507-residue protein sequence, read N- to C-terminus: E3 ubiquitin-protein ligase makorin-3 (507 aa).

Over residues 1–21 the composition is skewed to low complexity; sequence MEEPAAPSEAHEAAGAQAGAE. Disordered stretches follow at residues 1 to 48 and 69 to 89; these read MEEP…DSAL and RGGL…PLPS. The C3H1-type 1 zinc-finger motif lies at 95 to 122; sequence WTKQIICRYYIHGQCKEGENCRYSHDLS. The interval 126–149 is disordered; that stretch reads MATEGGVSPPGASAGGGPSTAAHI. Residues 238–265 form a C3H1-type 2 zinc finger; that stretch reads GSGLRFCYYASRGVCFRGESCMYLHGDI. A makorin-type Cys-His region spans residues 266–293; it reads CDMCGLQTLHPMDAAQREEHMRACIEAH. Residues 311-365 form an RING-type zinc finger; it reads CGICMEVVYEKANPNDRRFGILSNCNHSFCIRCIRRWRSARQFENRIVKSCPQCR. The C3H1-type 3 zinc finger occupies 394–423; the sequence is AMSNKACRYFAEGRGNCPFGDTCFYKHEYP.

In terms of tissue distribution, ubiquitous.

The protein localises to the nucleus. The catalysed reaction is S-ubiquitinyl-[E2 ubiquitin-conjugating enzyme]-L-cysteine + [acceptor protein]-L-lysine = [E2 ubiquitin-conjugating enzyme]-L-cysteine + N(6)-ubiquitinyl-[acceptor protein]-L-lysine.. It participates in protein modification; protein ubiquitination. E3 ubiquitin ligase catalyzing the covalent attachment of ubiquitin moieties onto substrate proteins. Acts as a key developmental timer that helps ensure puberty begins at the appropriate age, by inhibiting premature activation of the reproductive hormone cascade. Epigenetically regulates GNRH1 transcription by disrupting the binding of methyl-DNA binding protein 3/MBD3 to the promoter of GNRH1. Mechanistically, mediates the non-proteolytic ubiquitination of MBD3 at multiple sites with 'Lys27' ubiquitin linkages and thereby regulates the methylation status of the genome, including GNRH1 promoter. Modulates the stability and translation of GNRH1 mRNA by mediating the non-proteolytic ubiquitination of PABP family members PABPC1, PABPC3 and PABPC4 at multiple sites. Also participates in the maintenance of genomic and epigenomic stability by regulating the abundance of APEX2 via 'Lys-48'-linked ubiquitination. In Homo sapiens (Human), this protein is E3 ubiquitin-protein ligase makorin-3 (MKRN3).